The sequence spans 197 residues: 3-isopropylmalate dehydratase small subunit (197 aa).

The protein belongs to the LeuD family. LeuD type 1 subfamily. As to quaternary structure, heterodimer of LeuC and LeuD.

The catalysed reaction is (2R,3S)-3-isopropylmalate = (2S)-2-isopropylmalate. It participates in amino-acid biosynthesis; L-leucine biosynthesis; L-leucine from 3-methyl-2-oxobutanoate: step 2/4. Functionally, catalyzes the isomerization between 2-isopropylmalate and 3-isopropylmalate, via the formation of 2-isopropylmaleate. This Mycolicibacterium vanbaalenii (strain DSM 7251 / JCM 13017 / BCRC 16820 / KCTC 9966 / NRRL B-24157 / PYR-1) (Mycobacterium vanbaalenii) protein is 3-isopropylmalate dehydratase small subunit.